Consider the following 211-residue polypeptide: Urease accessory protein UreG (211 aa).

8-15 provides a ligand contact to GTP; that stretch reads GPVGSGKT.

The protein belongs to the SIMIBI class G3E GTPase family. UreG subfamily. As to quaternary structure, homodimer. UreD, UreF and UreG form a complex that acts as a GTP-hydrolysis-dependent molecular chaperone, activating the urease apoprotein by helping to assemble the nickel containing metallocenter of UreC. The UreE protein probably delivers the nickel.

It is found in the cytoplasm. Its function is as follows. Facilitates the functional incorporation of the urease nickel metallocenter. This process requires GTP hydrolysis, probably effectuated by UreG. The chain is Urease accessory protein UreG from Metallosphaera sedula (strain ATCC 51363 / DSM 5348 / JCM 9185 / NBRC 15509 / TH2).